We begin with the raw amino-acid sequence, 251 residues long: tRNA (guanine-N(7)-)-methyltransferase (251 aa).

Positions 80, 105, 132, and 155 each coordinate S-adenosyl-L-methionine. Asp155 is an active-site residue. Substrate contacts are provided by residues Lys159, Asp191, and 228–231 (TKFE).

Belongs to the class I-like SAM-binding methyltransferase superfamily. TrmB family.

The catalysed reaction is guanosine(46) in tRNA + S-adenosyl-L-methionine = N(7)-methylguanosine(46) in tRNA + S-adenosyl-L-homocysteine. Its pathway is tRNA modification; N(7)-methylguanine-tRNA biosynthesis. Catalyzes the formation of N(7)-methylguanine at position 46 (m7G46) in tRNA. This is tRNA (guanine-N(7)-)-methyltransferase from Histophilus somni (strain 129Pt) (Haemophilus somnus).